The primary structure comprises 324 residues: o-succinylbenzoate synthase (324 aa).

Lys-135 acts as the Proton donor in catalysis. Asp-163, Glu-192, and Asp-215 together coordinate Mg(2+). The Proton acceptor role is filled by Lys-237.

Belongs to the mandelate racemase/muconate lactonizing enzyme family. MenC type 1 subfamily. It depends on a divalent metal cation as a cofactor.

It carries out the reaction (1R,6R)-6-hydroxy-2-succinyl-cyclohexa-2,4-diene-1-carboxylate = 2-succinylbenzoate + H2O. It participates in quinol/quinone metabolism; 1,4-dihydroxy-2-naphthoate biosynthesis; 1,4-dihydroxy-2-naphthoate from chorismate: step 4/7. The protein operates within quinol/quinone metabolism; menaquinone biosynthesis. Functionally, converts 2-succinyl-6-hydroxy-2,4-cyclohexadiene-1-carboxylate (SHCHC) to 2-succinylbenzoate (OSB). The polypeptide is o-succinylbenzoate synthase (Aliivibrio fischeri (strain MJ11) (Vibrio fischeri)).